We begin with the raw amino-acid sequence, 573 residues long: Urease subunit alpha 2 (573 aa).

The region spanning 135-573 is the Urease domain; it reads GGMDTHVHYI…ISLNQLYFFS (439 aa). Ni(2+) contacts are provided by histidine 140, histidine 142, and lysine 223. Lysine 223 is subject to N6-carboxylysine. Residue histidine 225 coordinates substrate. Ni(2+) is bound by residues histidine 252 and histidine 278. Histidine 326 (proton donor) is an active-site residue. Aspartate 366 is a binding site for Ni(2+).

This sequence belongs to the metallo-dependent hydrolases superfamily. Urease alpha subunit family. In terms of assembly, heterotrimer of UreA (gamma), UreB (beta) and UreC (alpha) subunits. Three heterotrimers associate to form the active enzyme. It depends on Ni cation as a cofactor. In terms of processing, carboxylation allows a single lysine to coordinate two nickel ions.

Its subcellular location is the cytoplasm. It catalyses the reaction urea + 2 H2O + H(+) = hydrogencarbonate + 2 NH4(+). It functions in the pathway nitrogen metabolism; urea degradation; CO(2) and NH(3) from urea (urease route): step 1/1. The chain is Urease subunit alpha 2 from Brucella melitensis biotype 1 (strain ATCC 23456 / CCUG 17765 / NCTC 10094 / 16M).